The sequence spans 463 residues: Exodeoxyribonuclease 7 large subunit (463 aa).

Belongs to the XseA family. As to quaternary structure, heterooligomer composed of large and small subunits.

It localises to the cytoplasm. It catalyses the reaction Exonucleolytic cleavage in either 5'- to 3'- or 3'- to 5'-direction to yield nucleoside 5'-phosphates.. Functionally, bidirectionally degrades single-stranded DNA into large acid-insoluble oligonucleotides, which are then degraded further into small acid-soluble oligonucleotides. This chain is Exodeoxyribonuclease 7 large subunit, found in Bordetella bronchiseptica (strain ATCC BAA-588 / NCTC 13252 / RB50) (Alcaligenes bronchisepticus).